Here is a 408-residue protein sequence, read N- to C-terminus: MKRIFRLVRRCHYSTEKRTNGPLVLVSNNQNIHFNLSLENFLLNNYNDLLKYLNINTIEKFNEPILFLWRNNRSIIIGKNQNIWSECNLKNIKEDGVLVARRFTGGGAVYHDLGNVCFTFLNNNINTSSNFLIILNTLKNHFNIEAKTQGRNDITVNDQKCSGSAFKKIKDVFLHHGTILINLEKNILNKYLTPDKIKYIKHGVSSVNARTINLSEINNNITCENLCIALIKEFTKFYEQNYKENINNIKNLENNINNSNFQNKEQININNTNENNLINNTNIIPNDITVHYIDQNNNITKNPEFLKYYNLLKDWDWCYGKTPKFQNHIWKQFTFGKLELFFNVSNGFIKDGNIFSDCLDINLIDHLKSIFNNDIKYSKEDISIFFKKLNVENKNYLDEVRSWILQEL.

Residues 1-18 (MKRIFRLVRRCHYSTEKR) constitute a mitochondrion transit peptide. The region spanning 60-242 (KFNEPILFLW…EFTKFYEQNY (183 aa)) is the BPL/LPL catalytic domain. Residues R102, G107, and Y110 each contribute to the ATP site. G107 is a binding site for (R)-lipoate. Mg(2+) is bound at residue D153. ATP is bound at residue K160. K160 contributes to the (R)-lipoate binding site.

The protein belongs to the LplA family.

Its subcellular location is the mitochondrion. The enzyme catalyses L-lysyl-[lipoyl-carrier protein] + (R)-lipoate + ATP = N(6)-[(R)-lipoyl]-L-lysyl-[lipoyl-carrier protein] + AMP + diphosphate + H(+). It catalyses the reaction (R)-dihydrolipoate + L-lysyl-[lipoyl-carrier protein] + ATP = N(6)-[(R)-dihydrolipoyl]-L-lysyl-[lipoyl-carrier protein] + AMP + diphosphate + H(+). The catalysed reaction is (R)-dihydrolipoate + ATP + H(+) = N(6)-[(R)-dihydrolipoyl]-5'-AMP + diphosphate. It carries out the reaction N(6)-[(R)-dihydrolipoyl]-5'-AMP + L-lysyl-[lipoyl-carrier protein] = N(6)-[(R)-dihydrolipoyl]-L-lysyl-[lipoyl-carrier protein] + AMP + 2 H(+). Its pathway is protein modification; protein lipoylation via exogenous pathway; protein N(6)-(lipoyl)lysine from lipoate: step 1/2. It participates in protein modification; protein lipoylation via exogenous pathway; protein N(6)-(lipoyl)lysine from lipoate: step 2/2. Inhibited by the lipoate analog 8-bromo-octanoate (BrO). Catalytic activity is increased in the presence of Mg(2+). Its function is as follows. Catalyzes both the ATP-dependent activation of exogenously supplied lipoate to lipoyl-AMP and the transfer of the activated lipoyl onto the lipoyl domains of lipoate-dependent enzymes. In the mitochondrion, functions as a redox switch between two lipoylation routes. Senses the oxidation state of lipoate and determines which downstream enzymes will be lipoylated. In low reducing conditions, uses lipoate in its oxidized ring form to lipoylate glycine cleavage system H-protein GCVH. In high reducing conditions and together with LipL2, uses reduced lipoate (dihydrolipoate) to lipoylate the E2 component of the branched chain alpha-ketoacid dehydrogenase complex BCKDH-E2/BCDH and the E2 component of the alpha-ketoglutarate dehydrogenase complex KDH. LipL1 is responsible for catalysing the activation of lipoate, forming lipoyl-AMP while LipL2 is required but is not capable of catalyzing this reaction. In Plasmodium falciparum (isolate 3D7), this protein is Lipoate--protein ligase 1.